The chain runs to 232 residues: Lipoprotein-releasing system ATP-binding protein LolD (232 aa).

An ABC transporter domain is found at 11-232 (IEVTDLQRAF…LHDGRLIEEY (222 aa)). Residue 47-54 (GPSGAGKS) coordinates ATP.

This sequence belongs to the ABC transporter superfamily. Lipoprotein translocase (TC 3.A.1.125) family. In terms of assembly, the complex is composed of two ATP-binding proteins (LolD) and two transmembrane proteins (LolC and LolE).

It is found in the cell inner membrane. Its function is as follows. Part of the ABC transporter complex LolCDE involved in the translocation of mature outer membrane-directed lipoproteins, from the inner membrane to the periplasmic chaperone, LolA. Responsible for the formation of the LolA-lipoprotein complex in an ATP-dependent manner. The chain is Lipoprotein-releasing system ATP-binding protein LolD from Zymomonas mobilis subsp. mobilis (strain ATCC 31821 / ZM4 / CP4).